A 417-amino-acid polypeptide reads, in one-letter code: Exodeoxyribonuclease 7 large subunit (417 aa).

This sequence belongs to the XseA family. In terms of assembly, heterooligomer composed of large and small subunits.

The protein localises to the cytoplasm. The enzyme catalyses Exonucleolytic cleavage in either 5'- to 3'- or 3'- to 5'-direction to yield nucleoside 5'-phosphates.. Functionally, bidirectionally degrades single-stranded DNA into large acid-insoluble oligonucleotides, which are then degraded further into small acid-soluble oligonucleotides. This chain is Exodeoxyribonuclease 7 large subunit, found in Corynebacterium glutamicum (strain ATCC 13032 / DSM 20300 / JCM 1318 / BCRC 11384 / CCUG 27702 / LMG 3730 / NBRC 12168 / NCIMB 10025 / NRRL B-2784 / 534).